The chain runs to 459 residues: ATP synthase subunit beta (459 aa).

Residue 149 to 156 (GGAGVGKT) participates in ATP binding.

The protein belongs to the ATPase alpha/beta chains family. As to quaternary structure, F-type ATPases have 2 components, CF(1) - the catalytic core - and CF(0) - the membrane proton channel. CF(1) has five subunits: alpha(3), beta(3), gamma(1), delta(1), epsilon(1). CF(0) has three main subunits: a(1), b(2) and c(9-12). The alpha and beta chains form an alternating ring which encloses part of the gamma chain. CF(1) is attached to CF(0) by a central stalk formed by the gamma and epsilon chains, while a peripheral stalk is formed by the delta and b chains.

It is found in the cell inner membrane. It carries out the reaction ATP + H2O + 4 H(+)(in) = ADP + phosphate + 5 H(+)(out). Produces ATP from ADP in the presence of a proton gradient across the membrane. The catalytic sites are hosted primarily by the beta subunits. In Pseudomonas savastanoi pv. phaseolicola (strain 1448A / Race 6) (Pseudomonas syringae pv. phaseolicola (strain 1448A / Race 6)), this protein is ATP synthase subunit beta.